The sequence spans 815 residues: Probable bifunctional folylpolyglutamate synthase/dihydropteroate synthase (815 aa).

Residues 1 to 416 form a folylpolyglutamate synthase region; sequence MRYDEAANFL…LVAGSLFAVA (416 aa). Position 47-53 (47-53) interacts with ATP; it reads GSNGKGS. Residues 553–803 form the Pterin-binding domain; it reads TAVMGILNVT…DVPENVAAVR (251 aa). The tract at residues 555 to 815 is DHPS; sequence VMGILNVTPD…EATRTGADAE (261 aa). Asn560 is a Mg(2+) binding site. (7,8-dihydropterin-6-yl)methyl diphosphate contacts are provided by residues Thr600, Asp633, Asn652, Asp722, Lys758, and 791 to 793; that span reads RVH.

It in the N-terminal section; belongs to the folylpolyglutamate synthase family. The protein in the C-terminal section; belongs to the DHPS family. Mg(2+) is required as a cofactor.

It catalyses the reaction (6S)-5,6,7,8-tetrahydrofolyl-(gamma-L-Glu)(n) + L-glutamate + ATP = (6S)-5,6,7,8-tetrahydrofolyl-(gamma-L-Glu)(n+1) + ADP + phosphate + H(+). The enzyme catalyses (7,8-dihydropterin-6-yl)methyl diphosphate + 4-aminobenzoate = 7,8-dihydropteroate + diphosphate. The protein operates within cofactor biosynthesis; tetrahydrofolylpolyglutamate biosynthesis. It functions in the pathway cofactor biosynthesis; tetrahydrofolate biosynthesis; 7,8-dihydrofolate from 2-amino-4-hydroxy-6-hydroxymethyl-7,8-dihydropteridine diphosphate and 4-aminobenzoate: step 1/2. Its function is as follows. Can complement an H.volcanii mutant strain that is thymidine auxotroph because it lacks the two dihydrofolate reductase genes encoded by hdrA and hdrB. This chain is Probable bifunctional folylpolyglutamate synthase/dihydropteroate synthase (folP), found in Halobacterium salinarum (strain ATCC 700922 / JCM 11081 / NRC-1) (Halobacterium halobium).